Consider the following 404-residue polypeptide: MDTLVEDDICILNHEKAHKREAVTPLSAYPGDESVASHFALVTAYEDIKKRLKDSEKENSFLKKRIRALEEKLVGARVEEETSSVGREQVNKAYHAYREVCIDRDNLKSRLEKISKDNSESLRALTEQLQCKEVELLQLRTEVETQQVMRNLNPPSSNWEVEKLSCDLKIHGLEQELELLRKECSDLRTELQKARQTGPSQEDILQDRDVIRPSLPREEHVPHQGPHHSDHMQHAYWELRREMANLHLVTRVQAELLRQLKTAAAGKACTQVGCVEDLGRDSAKLHLANCTAAYKRHPPLSPHGKATCYAPPSTLPGDRKAFSDKAVLQSWTDNERLTPNDGADFQEHNSYGRNSLEDNSWVFPSPPKSSETAFGESKSKILPSPNLPPLHYLDQHNQNCLYKS.

A homodimerization region spans residues 1–198; that stretch reads MDTLVEDDIC…TELQKARQTG (198 aa). Residues 40–198 adopt a coiled-coil conformation; that stretch reads ALVTAYEDIK…TELQKARQTG (159 aa). An interaction with TBK1 and IKBKE region spans residues 229–269; that stretch reads SDHMQHAYWELRREMANLHLVTRVQAELLRQLKTAAAGKAC. Serine 330 bears the Phosphoserine mark. 2 disordered regions span residues 332-351 and 356-390; these read TDNE…HNSY and LEDN…LPPL. Serine 365 is modified (phosphoserine).

In terms of assembly, homodimer. Interacts with IKBKE, TBK1 and TICAM1. Interacts with TAX1BP1. Interacts with CALCOCO2. In terms of processing, ubiquitinated via 'Lys-48'-linked polyubiquitination by TRIM38, leading to its degradation.

It is found in the cytoplasm. Adapter protein which binds TBK1 and IKBKE playing a role in antiviral innate immunity. Activates serine/threonine-protein kinase TBK1 and facilitates its oligomerization. Enhances the phosphorylation of NF-kappa-B p65 subunit RELA by TBK1. Promotes TBK1-induced as well as TNF-alpha or PMA-induced activation of NF-kappa-B. Participates in IFNB promoter activation via TICAM1. This chain is 5-azacytidine-induced protein 2 (Azi2), found in Rattus norvegicus (Rat).